Reading from the N-terminus, the 357-residue chain is Peptide chain release factor 1 (357 aa).

Position 236 is an N5-methylglutamine (Gln-236).

This sequence belongs to the prokaryotic/mitochondrial release factor family. In terms of processing, methylated by PrmC. Methylation increases the termination efficiency of RF1.

Its subcellular location is the cytoplasm. In terms of biological role, peptide chain release factor 1 directs the termination of translation in response to the peptide chain termination codons UAG and UAA. The polypeptide is Peptide chain release factor 1 (Mycobacterium marinum (strain ATCC BAA-535 / M)).